Here is a 636-residue protein sequence, read N- to C-terminus: Iron transport multicopper oxidase FET3 (636 aa).

The signal sequence occupies residues 1–21; that stretch reads MTNALLSIAVLLFSMLSLAQA. Topologically, residues 22-559 are extracellular; it reads ETHTFNWTTG…AFIPTGFTKK (538 aa). 3 N-linked (GlcNAc...) asparagine glycosylation sites follow: Asn-27, Asn-74, and Asn-77. Plastocyanin-like domains follow at residues 32-146 and 157-301; these read WDYR…IKDD and SLSL…VYNK. Cu cation contacts are provided by His-81 and His-83. 2 N-linked (GlcNAc...) asparagine glycosylation sites follow: Asn-88 and Asn-113. Cu cation-binding residues include His-126 and His-128. 8 N-linked (GlcNAc...) asparagine glycosylation sites follow: Asn-194, Asn-198, Asn-244, Asn-265, Asn-292, Asn-300, Asn-359, and Asn-381. The Plastocyanin-like 3 domain maps to 362–502; it reads YTAPKVPTLM…GLGLVLVEDP (141 aa). The Cu cation site is built by His-413, His-416, His-418, His-483, Cys-484, His-485, and His-489. The chain crosses the membrane as a helical span at residues 560–584; that stretch reads GIIAMTFSCFAGILGIITIAIYGMM. Topologically, residues 585 to 636 are cytoplasmic; the sequence is DMEDATEKVIRDLHVDPEVLLNEVDENEERQVNEDRHSTEKHQFLTKAKRFF.

It belongs to the multicopper oxidase family. It depends on Cu cation as a cofactor.

It localises to the cell membrane. The enzyme catalyses 4 Fe(2+) + O2 + 4 H(+) = 4 Fe(3+) + 2 H2O. It catalyses the reaction 4 Cu(+) + O2 + 4 H(+) = 4 Cu(2+) + 2 H2O. Its function is as follows. Iron transport multicopper ferroxidase required for Fe(2+) ion high affinity uptake. Required to oxidize Fe(2+) to Fe(3+), which is then transported into the cell via the ferric iron permease FTR1. Essential component of copper-dependent iron transport. Also has cuprous oxidase activity. The protein is Iron transport multicopper oxidase FET3 (FET3) of Saccharomyces cerevisiae (strain ATCC 204508 / S288c) (Baker's yeast).